The following is a 50-amino-acid chain: Alpha-conotoxin CnIG (50 aa).

An N-terminal signal peptide occupies residues 1 to 7; that stretch reads LTTTVVS. Polar residues predominate over residues 1–13; sequence LTTTVVSFPSDSA. Residues 1 to 26 are disordered; sequence LTTTVVSFPSDSASDGRDNEAKDERS. Positions 8–35 are excised as a propeptide; it reads FPSDSASDGRDNEAKDERSDMYELKRNG. Residues 14–26 show a composition bias toward basic and acidic residues; it reads SDGRDNEAKDERS. Cystine bridges form between cysteine 37–cysteine 42 and cysteine 38–cysteine 48. A Cysteine amide modification is found at cysteine 48.

This sequence belongs to the conotoxin A superfamily. As to expression, expressed by the venom duct.

Its subcellular location is the secreted. This chain is Alpha-conotoxin CnIG, found in Conus consors (Singed cone).